An 818-amino-acid chain; its full sequence is Nibrin (818 aa).

Residues 22–70 (YVVGRKNCEILLTNDQSISRVHAVLTVTEQAVTLKDSSKYGTFVNGEKL) enclose the FHA domain. BRCT domains are found at residues 91–168 (SKFS…SALS) and 211–301 (GKTF…LAAI). Disordered regions lie at residues 372–716 (AVGE…DLPR), 729–757 (NNSS…KKNV), and 793–818 (EEKL…AKKR). Over residues 379–405 (KTNPTQKASTTNKPLSLGQEPSSTRIV) the composition is skewed to polar residues. Over residues 409–419 (VMSSESFSVVE) the composition is skewed to low complexity. Residues 444-469 (APSSGNTTLKHSPQKQTALTSFFQPS) show a composition bias toward polar residues. Residues 470 to 475 (SKKRPR) carry the Nuclear localization signal motif. The span at 515-530 (EETSLGQACGTGQNSS) shows a compositional bias: polar residues. The segment covering 549-571 (TAADDLEMSLEELEFLMSDEMDE) has biased composition (acidic residues). Residues 586-602 (GLTSKINSEQLSNQQEV) show a composition bias toward polar residues. The segment covering 603–612 (TESKGRKGEK) has biased composition (basic and acidic residues). The span at 613 to 625 (NQQSSSSNIQSMQ) shows a compositional bias: low complexity. Polar residues-rich tracts occupy residues 633 to 644 (VTNQDTQTQSKR) and 653 to 662 (SSANKGPSKN). The segment covering 663–675 (KTPELEEVKKEEV) has biased composition (basic and acidic residues). Composition is skewed to polar residues over residues 678–692 (VVNS…QTSE) and 699–708 (MQASTSNSGP). Residues 793-808 (EEKLNEREETLGDDLF) show a composition bias toward basic and acidic residues. The FxF/Y motif signature appears at 804 to 813 (GDDLFRYNPR).

It belongs to the Nibrin family. As to quaternary structure, component of the MRN complex composed of two heterodimers rad50 and mre11 associated with a single nbn.

Its subcellular location is the nucleus. The protein localises to the chromosome. It is found in the PML body. The protein resides in the telomere. Component of the MRN complex, which plays a central role in double-strand break (DSB) repair, DNA recombination, maintenance of telomere integrity and meiosis. The MRN complex is involved in the repair of DNA double-strand breaks (DSBs) via homologous recombination (HR), an error-free mechanism which primarily occurs during S and G2 phases. The complex (1) mediates the end resection of damaged DNA, which generates proper single-stranded DNA, a key initial steps in HR, and is (2) required for the recruitment of other repair factors and efficient activation of ATM and ATR upon DNA damage. The MRN complex possesses single-strand endonuclease activity and double-strand-specific 3'-5' exonuclease activity, which are provided by MRE11, to initiate end resection, which is required for single-strand invasion and recombination. Within the MRN complex, nbn acts as a protein-protein adapter, which specifically recognizes and binds phosphorylated proteins, promoting their recruitment to DNA damage sites. Recruits mre11 and rad50 components of the MRN complex to DSBs in response to DNA damage. Promotes the recruitment of PI3/PI4-kinase family members atm, atr, and probably DNA-PKcs to the DNA damage sites, activating their functions. Mediates the recruitment of phosphorylated rbbp8/CtIP to DSBs, leading to cooperation between the MRN complex and rbbp8/CtIP to initiate end resection. The MRN complex and rbbp8/CtIP are also required for chromosome alignment during metaphase. This is Nibrin (nbn) from Danio rerio (Zebrafish).